The chain runs to 363 residues: Probable L-tyrosine/L-aspartate decarboxylase (363 aa).

Lysine 224 is modified (N6-(pyridoxal phosphate)lysine).

This sequence belongs to the group II decarboxylase family. MfnA subfamily. It depends on pyridoxal 5'-phosphate as a cofactor.

The enzyme catalyses L-tyrosine + H(+) = tyramine + CO2. It carries out the reaction L-aspartate + H(+) = beta-alanine + CO2. It participates in cofactor biosynthesis; methanofuran biosynthesis. The protein operates within cofactor biosynthesis; coenzyme A biosynthesis. Functionally, catalyzes the decarboxylation of L-tyrosine to produce tyramine for methanofuran biosynthesis. Can also catalyze the decarboxylation of L-aspartate to produce beta-alanine for coenzyme A (CoA) biosynthesis. The polypeptide is Probable L-tyrosine/L-aspartate decarboxylase (Methanosphaerula palustris (strain ATCC BAA-1556 / DSM 19958 / E1-9c)).